The primary structure comprises 391 residues: 3-ketoacyl-CoA thiolase (391 aa).

Catalysis depends on cysteine 95, which acts as the Acyl-thioester intermediate. Active-site proton acceptor residues include histidine 347 and cysteine 377.

This sequence belongs to the thiolase-like superfamily. Thiolase family. Heterotetramer of two alpha chains (FadB) and two beta chains (FadA).

The protein localises to the cytoplasm. The catalysed reaction is an acyl-CoA + acetyl-CoA = a 3-oxoacyl-CoA + CoA. It participates in lipid metabolism; fatty acid beta-oxidation. Its function is as follows. Catalyzes the final step of fatty acid oxidation in which acetyl-CoA is released and the CoA ester of a fatty acid two carbons shorter is formed. The sequence is that of 3-ketoacyl-CoA thiolase from Pseudomonas fragi.